The primary structure comprises 405 residues: MALPRAMRPGGSHPNNFLFNTLPVIDNPVERQRAMAVFERESLRDAFEMLTPIAPSLKNAFLIFNEDGLLIHTSVGGEQVYIPIQTNNMESYSWKKAPPAVFLANVDGRRGLLDAFKAKTQTNVSKVVFEIENYSPSRILTQTVFSARDQTEEDTEMGSDAEGATQTVSSRLVKHEFNNYALMLPTRQPDVSMSLSKAQLNKILGVCKQAGDPITFQCLFDDTLQVRSGDRQVVFSVDYQHADNCGVESSSSLLEKMPMKTKKSAPEPIRGISGRRLFTLVLDEDTNFKQLIQKLKLKNAGAVLNFFLDPDSIPMIGLSTKQPFSVMMFFMCSYPTQPCQVGFSPAAFSSTPMGAGVKRRASEEEESDQPPKKLFPDGKLFKSNFVLLMDKTGAKIPCPEQPMHF.

The tract at residues 354-376 (GAGVKRRASEEEESDQPPKKLFP) is disordered. The short motif at 358-373 (KRRASEEEESDQPPKK) is the Bipartite nuclear localization signal element.

Belongs to the herpesviridae DNA polymerase processivity factor family. In terms of assembly, interacts with the DNA polymerase catalytic subunit. Interacts with the origin-binding protein.

The protein localises to the host nucleus. In terms of biological role, plays an essential role in viral DNA replication by acting as the polymerase accessory subunit. Associates with the viral polymerase to increase its processivity and forms high-affinity direct interactions with DNA. Facilitates the origin-binding protein loading onto DNA thus increasing its ability to assemble into a functional complex capable of unwinding duplex DNA. The chain is DNA polymerase processivity factor from Equine herpesvirus 1 (strain Ab4p) (EHV-1).